The sequence spans 739 residues: Phosphoribosylformylglycinamidine synthase subunit PurL (739 aa).

The active site involves His54. Positions 57 and 96 each coordinate ATP. Glu98 is a binding site for Mg(2+). Substrate-binding positions include 99–102 (SHNH) and Arg121. The Proton acceptor role is filled by His100. Asp122 serves as a coordination point for Mg(2+). Gln245 is a binding site for substrate. Mg(2+) is bound at residue Asp273. Substrate is bound at residue 317–319 (ESQ). ATP is bound by residues Asp500 and Gly537. Residue Asn538 coordinates Mg(2+). Ser540 is a substrate binding site.

This sequence belongs to the FGAMS family. As to quaternary structure, monomer. Part of the FGAM synthase complex composed of 1 PurL, 1 PurQ and 2 PurS subunits.

The protein resides in the cytoplasm. It catalyses the reaction N(2)-formyl-N(1)-(5-phospho-beta-D-ribosyl)glycinamide + L-glutamine + ATP + H2O = 2-formamido-N(1)-(5-O-phospho-beta-D-ribosyl)acetamidine + L-glutamate + ADP + phosphate + H(+). Its pathway is purine metabolism; IMP biosynthesis via de novo pathway; 5-amino-1-(5-phospho-D-ribosyl)imidazole from N(2)-formyl-N(1)-(5-phospho-D-ribosyl)glycinamide: step 1/2. Part of the phosphoribosylformylglycinamidine synthase complex involved in the purines biosynthetic pathway. Catalyzes the ATP-dependent conversion of formylglycinamide ribonucleotide (FGAR) and glutamine to yield formylglycinamidine ribonucleotide (FGAM) and glutamate. The FGAM synthase complex is composed of three subunits. PurQ produces an ammonia molecule by converting glutamine to glutamate. PurL transfers the ammonia molecule to FGAR to form FGAM in an ATP-dependent manner. PurS interacts with PurQ and PurL and is thought to assist in the transfer of the ammonia molecule from PurQ to PurL. The polypeptide is Phosphoribosylformylglycinamidine synthase subunit PurL (Bacillus cereus (strain ATCC 14579 / DSM 31 / CCUG 7414 / JCM 2152 / NBRC 15305 / NCIMB 9373 / NCTC 2599 / NRRL B-3711)).